Reading from the N-terminus, the 1503-residue chain is DNA-directed RNA polymerase subunit beta' (1503 aa).

Residues Cys-60, Cys-62, Cys-75, and Cys-78 each coordinate Zn(2+). Positions 626, 628, and 630 each coordinate Mg(2+). Positions 1002, 1075, 1082, and 1085 each coordinate Zn(2+). The disordered stretch occupies residues 1439–1503 (EESQQAEEAP…EEEDNDLPAF (65 aa)). A compositionally biased stretch (acidic residues) spans 1486 to 1503 (GDNDQSDAEEEDNDLPAF).

The protein belongs to the RNA polymerase beta' chain family. In terms of assembly, the RNAP catalytic core consists of 2 alpha, 1 beta, 1 beta' and 1 omega subunit. When a sigma factor is associated with the core the holoenzyme is formed, which can initiate transcription. Mg(2+) serves as cofactor. It depends on Zn(2+) as a cofactor.

The catalysed reaction is RNA(n) + a ribonucleoside 5'-triphosphate = RNA(n+1) + diphosphate. In terms of biological role, DNA-dependent RNA polymerase catalyzes the transcription of DNA into RNA using the four ribonucleoside triphosphates as substrates. The sequence is that of DNA-directed RNA polymerase subunit beta' from Chloroflexus aurantiacus (strain ATCC 29364 / DSM 637 / Y-400-fl).